Consider the following 442-residue polypeptide: RNA-binding protein 34 (442 aa).

2 disordered regions span residues 1-26 and 60-157; these read MALG…GVSC and TAEP…VADG. Residues 112–122 are compositionally biased toward basic and acidic residues; sequence KLSDADKRLAN. An N6-acetyllysine modification is found at K153. RRM domains follow at residues 189–284 and 291–368; these read RTVF…LASE and RSVF…RSVN. K246 participates in a covalent cross-link: Glycyl lysine isopeptide (Lys-Gly) (interchain with G-Cter in SUMO2). Residue S292 is modified to Phosphoserine. Positions 418–442 are disordered; it reads KAVLMKKKKKGQKKKVQMKKPRKQQ. Residues 421–442 are compositionally biased toward basic residues; that stretch reads LMKKKKKGQKKKVQMKKPRKQQ.

This sequence belongs to the RRM RBM34 family.

It is found in the nucleus. The protein resides in the nucleolus. The chain is RNA-binding protein 34 (Rbm34) from Mus musculus (Mouse).